Here is a 2025-residue protein sequence, read N- to C-terminus: Pericentriolar material 1 protein (2025 aa).

Positions 1 to 91 are disordered; that stretch reads MATGGGPFEE…TFPHSRYMTQ (91 aa). The residue at position 2 (A2) is an N-acetylalanine. A mediates interaction with DZIP1 region spans residues 2–1458; that stretch reads ATGGGPFEEV…TWVASNSELT (1457 aa). Residues S65, S68, S69, S93, S110, S116, S119, and S159 each carry the phosphoserine modification. The disordered stretch occupies residues 111–140; it reads DLDQRSIGSDSQGRATAANNKRQLSENRKP. A compositionally biased stretch (polar residues) spans 116–132; sequence SIGSDSQGRATAANNKR. Residues 218-301 are a coiled coil; the sequence is KASSMREDLV…QLRALQGRQA (84 aa). The tract at residues 354 to 390 is disordered; it reads RDSQPPAVPDNRRQAESLSLTREISQSRNPSVSEHLP. Over residues 369 to 385 the composition is skewed to polar residues; the sequence is ESLSLTREISQSRNPSV. At S370 the chain carries Phosphoserine. S372 bears the Phosphoserine; by PLK4 mark. S384 is subject to Phosphoserine. K399 is subject to N6-acetyllysine. Coiled coils occupy residues 399–426 and 492–518; these read KMRV…QHLN and AEKL…YEQT. 2 disordered regions span residues 528–553 and 565–586; these read ENTK…VTNI and VNTN…VNSN. Acidic residues predominate over residues 531–540; it reads KDEETEESEY. Phosphoserine is present on S593. Residues 620–654 are disordered; it reads AHGEDEEEEVEEEGVSGASLSSRRSSLVDEAPEDE. Positions 623-633 are enriched in acidic residues; that stretch reads EDEEEEVEEEG. Over residues 634 to 644 the composition is skewed to low complexity; the sequence is VSGASLSSRRS. A Phosphoserine modification is found at S644. 2 coiled-coil regions span residues 652–772 and 822–856; these read EDEE…PDLQ and SDMR…GLAE. T857 carries the post-translational modification Phosphothreonine. 4 positions are modified to phosphoserine: S859, S864, S867, and S870. 2 disordered regions span residues 866 to 885 and 913 to 940; these read RSDG…EKTM and TDEE…NQNS. Residues 870 to 879 are compositionally biased toward polar residues; that stretch reads SENLCTPQQS. T875 carries the phosphothreonine modification. Phosphoserine occurs at positions 957, 974, 985, and 988. Coiled coils occupy residues 985-1017 and 1061-1086; these read SELS…CQTL and QLTW…QNQH. Disordered stretches follow at residues 1081 to 1105 and 1149 to 1213; these read RQQN…PSSP and FSQN…YDQE. The span at 1086 to 1096 shows a compositional bias: basic and acidic residues; the sequence is HPEKPRSKERG. Positions 1149-1169 are enriched in polar residues; it reads FSQNVSTPTEQQQPLAQNPSG. Residues S1182 and S1185 each carry the phosphoserine modification. Residues 1189–1198 are compositionally biased toward basic and acidic residues; that stretch reads EKQRNQKQPE. Phosphoserine is present on residues S1228, S1254, S1257, S1259, and S1260. Residues 1230-1310 are disordered; it reads EKATNSNRKN…STQLKSRVKN (81 aa). Positions 1268–1285 are enriched in polar residues; the sequence is TTVTKTFKTRKASAQASL. S1315 and S1317 each carry phosphoserine. The disordered stretch occupies residues 1319–1338; the sequence is SSTCEPCKNRNRHSAQTEEP. The residue at position 1466 (T1466) is a Phosphothreonine. A phosphoserine mark is found at S1571, S1695, S1729, S1766, S1769, S1777, and S1783. The tract at residues 1720-1943 is disordered; sequence KRILEGDHGS…AGSPDTESPV (224 aa). Residues 1756-1768 are compositionally biased toward basic and acidic residues; sequence YDAKGPKNVRSDV. The segment covering 1784–1798 has biased composition (polar residues); that stretch reads INLSKAESQALTNYG. Over residues 1800 to 1816 the composition is skewed to acidic residues; it reads GEDENEDEEMEDFEESP. Composition is skewed to polar residues over residues 1818–1828, 1849–1858, 1879–1901, and 1925–1934; these read DIQTSLQANTE, ESTNVPSDQE, ENEQ…SSKQ, and AQETPESSLA. Phosphoserine occurs at positions 1959 and 1978.

Belongs to the PCM1 family. In terms of assembly, self-associates. Interacts with BBS4, BBS8, CETN3, HAP1, NDE1, NDEL1, MAP1LC3B, GABARAPAL2, and GABARAP. Interacts with CEP131; the interaction increases in response to ultraviolet light (UV) radiation. Associates with microtubule; association to microtubule is reduced in response to cellular stress, such as ultraviolet light (UV) radiation or heat shock, in a process that requires p38 MAP kinase signaling. Interacts with C2CD3. Interacts with CFAP263. Interacts with SSX2IP. Interacts with CCDC13. Interacts with CEP290. Interacts with PARD6A. Interacts with KIAA0753/OFIP, CEP20/FOR20 and OFD1; the interaction with CEP20/FOR20 and OFD1 may be mediated by KIAA0753/OFIP. Interacts with CCDC66. Interacts with CCDC61. Interacts with DZIP1; localizes DZIP1 and the associated BBSome to centriolar satellite. Interacts with CSTPP1, TTLL1, TPGS1 and LRRC49. Interacts with CFAP53. Post-translationally, ubiquitinated. Undergoes monoubiquitination catalyzed by the E3 ubiquitin-protein ligase MIB1 in proliferating cells, preventing cilia formation. Monoubiquitination by MIB1 is inhibited in response to cellular stress, such as ultraviolet light (UV) radiation or heat shock, resulting in cilia formation initiation. Phosphorylated on multiple serine and threonine residues by DYRK3 during the G2-to-M transition, after the nuclear-envelope breakdown. Phosphorylation by DYRK3 promotes disassembly of pericentriolar material. Phosphorylation at Ser-372 mediated by PLK4 is required to maintain the integrity of centriolar satellites. Expressed in the hippocampus and dentate gyrus, the columnar epithelial cells of bronchioles, the olfactory epithelium, the pericardium and the inner segment of the retina.

The protein localises to the cytoplasm. It localises to the cytoskeleton. It is found in the microtubule organizing center. The protein resides in the centrosome. Its subcellular location is the cytoplasmic granule. The protein localises to the centriolar satellite. It localises to the cilium basal body. Functionally, required for centrosome assembly and function. Essential for the correct localization of several centrosomal proteins including CEP250, CETN3, PCNT and NEK2. Required to anchor microtubules to the centrosome. Also involved in cilium biogenesis by recruiting the BBSome, a ciliary protein complex involved in cilium biogenesis, to the centriolar satellites. Recruits the tubulin polyglutamylase complex (TPGC) to centriolar satellites. In Mus musculus (Mouse), this protein is Pericentriolar material 1 protein.